Consider the following 422-residue polypeptide: Histidine--tRNA ligase (422 aa).

The protein belongs to the class-II aminoacyl-tRNA synthetase family. In terms of assembly, homodimer.

The protein resides in the cytoplasm. It catalyses the reaction tRNA(His) + L-histidine + ATP = L-histidyl-tRNA(His) + AMP + diphosphate + H(+). The chain is Histidine--tRNA ligase from Nocardia farcinica (strain IFM 10152).